The sequence spans 24 residues: Potassium channel toxin alpha-KTx 6 OcyKTx5 (24 aa).

A disulfide bridge connects residues Cys-3 and Cys-24.

The protein belongs to the short scorpion toxin superfamily. Potassium channel inhibitor family. Alpha-KTx 06 subfamily. As to expression, expressed by the venom gland.

It is found in the secreted. In terms of biological role, blocks voltage-gated potassium channels. The protein is Potassium channel toxin alpha-KTx 6 OcyKTx5 of Opisthacanthus cayaporum (South American scorpion).